A 726-amino-acid chain; its full sequence is Catalase-peroxidase (726 aa).

The interval 1-34 is disordered; that stretch reads MSMSDDTHNSLSTGKCPFHQGSHDRSAGAGTSSH. The tryptophyl-tyrosyl-methioninium (Trp-Tyr) (with M-252) cross-link spans 105 to 226; it reads WHGAGTYRSV…LGATEMGLIY (122 aa). Residue His-106 is the Proton acceptor of the active site. The segment at residues 226-252 is a cross-link (tryptophyl-tyrosyl-methioninium (Tyr-Met) (with W-105)); sequence YVNPEGPDHSGEPLSAAAAIRATFGNM. His-267 contributes to the heme b binding site.

This sequence belongs to the peroxidase family. Peroxidase/catalase subfamily. Homodimer or homotetramer. Requires heme b as cofactor. Post-translationally, formation of the three residue Trp-Tyr-Met cross-link is important for the catalase, but not the peroxidase activity of the enzyme.

It carries out the reaction H2O2 + AH2 = A + 2 H2O. It catalyses the reaction 2 H2O2 = O2 + 2 H2O. Functionally, bifunctional enzyme with both catalase and broad-spectrum peroxidase activity. This chain is Catalase-peroxidase, found in Citrobacter koseri (strain ATCC BAA-895 / CDC 4225-83 / SGSC4696).